Consider the following 677-residue polypeptide: UvrABC system protein B (677 aa).

The region spanning Ala-27–Gly-192 is the Helicase ATP-binding domain. ATP is bound at residue Gly-40 to Thr-47. A Beta-hairpin motif is present at residues Tyr-93–Ile-116. One can recognise a Helicase C-terminal domain in the interval Gln-432–Leu-594. The UVR domain maps to Ala-638 to Arg-673.

It belongs to the UvrB family. Forms a heterotetramer with UvrA during the search for lesions. Interacts with UvrC in an incision complex.

The protein localises to the cytoplasm. Functionally, the UvrABC repair system catalyzes the recognition and processing of DNA lesions. A damage recognition complex composed of 2 UvrA and 2 UvrB subunits scans DNA for abnormalities. Upon binding of the UvrA(2)B(2) complex to a putative damaged site, the DNA wraps around one UvrB monomer. DNA wrap is dependent on ATP binding by UvrB and probably causes local melting of the DNA helix, facilitating insertion of UvrB beta-hairpin between the DNA strands. Then UvrB probes one DNA strand for the presence of a lesion. If a lesion is found the UvrA subunits dissociate and the UvrB-DNA preincision complex is formed. This complex is subsequently bound by UvrC and the second UvrB is released. If no lesion is found, the DNA wraps around the other UvrB subunit that will check the other stand for damage. This Nitratidesulfovibrio vulgaris (strain DP4) (Desulfovibrio vulgaris) protein is UvrABC system protein B.